Consider the following 109-residue polypeptide: Large ribosomal subunit protein uL24 (109 aa).

Belongs to the universal ribosomal protein uL24 family. In terms of assembly, part of the 50S ribosomal subunit.

Its function is as follows. One of two assembly initiator proteins, it binds directly to the 5'-end of the 23S rRNA, where it nucleates assembly of the 50S subunit. One of the proteins that surrounds the polypeptide exit tunnel on the outside of the subunit. The chain is Large ribosomal subunit protein uL24 from Mesoplasma florum (strain ATCC 33453 / NBRC 100688 / NCTC 11704 / L1) (Acholeplasma florum).